The sequence spans 219 residues: Carboxypeptidase Y inhibitor (219 aa).

Met1 is subject to N-acetylmethionine.

The protein belongs to the phosphatidylethanolamine-binding protein family. In terms of assembly, monomer.

It is found in the cytoplasm. Its function is as follows. Specific and potent inhibitor of carboxypeptidase Y. The protein is Carboxypeptidase Y inhibitor (TFS1) of Saccharomyces cerevisiae (strain ATCC 204508 / S288c) (Baker's yeast).